The following is a 208-amino-acid chain: MQHLAIFGGTFDPIHWGHLLIAEAALQQISIEKVIWVPSLNPPHKKASAFRHRLAMLQLATQDNPAFTVSSVEKNRSGVSYAINTLTDLSVCFPNTHWYWIVGLDTFQTLPRWYRGQELAPMCDWLIAPRLVGGENIAQSELICKQVKQQLRKQSNTIHWHLLHIPLVGVSSSLIRKLYRVGKSIRYLVPEDVRSYIADHKLYSEDSE.

The protein belongs to the NadD family.

The catalysed reaction is nicotinate beta-D-ribonucleotide + ATP + H(+) = deamido-NAD(+) + diphosphate. The protein operates within cofactor biosynthesis; NAD(+) biosynthesis; deamido-NAD(+) from nicotinate D-ribonucleotide: step 1/1. Catalyzes the reversible adenylation of nicotinate mononucleotide (NaMN) to nicotinic acid adenine dinucleotide (NaAD). This Trichormus variabilis (strain ATCC 29413 / PCC 7937) (Anabaena variabilis) protein is Probable nicotinate-nucleotide adenylyltransferase.